We begin with the raw amino-acid sequence, 93 residues long: Putative regulatory protein LA_2599 (93 aa).

The protein belongs to the RemA family.

In Leptospira interrogans serogroup Icterohaemorrhagiae serovar Lai (strain 56601), this protein is Putative regulatory protein LA_2599.